The following is a 308-amino-acid chain: Carbonic anhydrase 4 (308 aa).

The N-terminal stretch at 1–18 (MQLLFALLALGALRPLAG) is a signal peptide. The 261-residue stretch at 21–281 (LHWCYEIQAS…LGDRSVFKSQ (261 aa)) folds into the Alpha-carbonic anhydrase domain. 2 cysteine pairs are disulfide-bonded: Cys-24/Cys-34 and Cys-44/Cys-225. Residue Asn-31 is glycosylated (N-linked (GlcNAc...) asparagine). The active-site Proton donor/acceptor is His-86. The Zn(2+) site is built by His-113, His-115, and His-138. The N-linked (GlcNAc...) asparagine glycan is linked to Asn-192. 221–222 (TT) provides a ligand contact to substrate. Ser-280 carries the GPI-anchor amidated serine lipid modification. The propeptide at 281–308 (QAAGQLLPLPLPTLLVPTLACVMAGLLR) is removed in mature form.

Belongs to the alpha-carbonic anhydrase family. As to quaternary structure, interacts with SLC4A4. Requires Zn(2+) as cofactor.

Its subcellular location is the cell membrane. The enzyme catalyses hydrogencarbonate + H(+) = CO2 + H2O. With respect to regulation, inhibited by acetazolamide. Functionally, catalyzes the reversible hydration of carbon dioxide into bicarbonate and protons and thus is essential to maintaining intracellular and extracellular pH. May stimulate the sodium/bicarbonate transporter activity of SLC4A4 that acts in pH homeostasis. It is essential for acid overload removal from the retina and retina epithelium, and acid release in the choriocapillaris in the choroid. This is Carbonic anhydrase 4 (CA4) from Oryctolagus cuniculus (Rabbit).